We begin with the raw amino-acid sequence, 173 residues long: Crossover junction endodeoxyribonuclease RuvC (173 aa).

Active-site residues include D8, E67, and D139. Mg(2+) is bound by residues D8, E67, and D139.

Belongs to the RuvC family. In terms of assembly, homodimer which binds Holliday junction (HJ) DNA. The HJ becomes 2-fold symmetrical on binding to RuvC with unstacked arms; it has a different conformation from HJ DNA in complex with RuvA. In the full resolvosome a probable DNA-RuvA(4)-RuvB(12)-RuvC(2) complex forms which resolves the HJ. The cofactor is Mg(2+).

Its subcellular location is the cytoplasm. It catalyses the reaction Endonucleolytic cleavage at a junction such as a reciprocal single-stranded crossover between two homologous DNA duplexes (Holliday junction).. The RuvA-RuvB-RuvC complex processes Holliday junction (HJ) DNA during genetic recombination and DNA repair. Endonuclease that resolves HJ intermediates. Cleaves cruciform DNA by making single-stranded nicks across the HJ at symmetrical positions within the homologous arms, yielding a 5'-phosphate and a 3'-hydroxyl group; requires a central core of homology in the junction. The consensus cleavage sequence is 5'-(A/T)TT(C/G)-3'. Cleavage occurs on the 3'-side of the TT dinucleotide at the point of strand exchange. HJ branch migration catalyzed by RuvA-RuvB allows RuvC to scan DNA until it finds its consensus sequence, where it cleaves and resolves the cruciform DNA. The protein is Crossover junction endodeoxyribonuclease RuvC of Vibrio vulnificus (strain YJ016).